Reading from the N-terminus, the 427-residue chain is Putative acyl-CoA thioester hydrolase YbhC (427 aa).

Positions 1–21 are cleaved as a signal peptide; sequence MNTFSVSRLALALAFGVTLTA. Residue cysteine 22 is the site of N-palmitoyl cysteine attachment. Cysteine 22 carries S-diacylglycerol cysteine lipidation. The segment at 23-42 is disordered; the sequence is SSTPPDQRPSDQTAPGTSSR. Cysteine 185 and cysteine 197 form a disulfide bridge. Aspartate 285 serves as the catalytic Nucleophile. Arginine 345 provides a ligand contact to substrate.

Belongs to the pectinesterase family.

The protein resides in the cell outer membrane. In terms of biological role, putative thioesterase. Does not bind pectin, and has no pectinesterase activity. This is Putative acyl-CoA thioester hydrolase YbhC (ybhC) from Escherichia coli (strain K12).